The following is a 125-amino-acid chain: Large ribosomal subunit protein eL22 (125 aa).

The protein belongs to the eukaryotic ribosomal protein eL22 family. Component of the large ribosomal subunit.

Its subcellular location is the cytoplasm. In terms of biological role, component of the large ribosomal subunit. The ribosome is a large ribonucleoprotein complex responsible for the synthesis of proteins in the cell. This Gadus morhua (Atlantic cod) protein is Large ribosomal subunit protein eL22 (rpl22).